The chain runs to 686 residues: L-type lectin-domain containing receptor kinase VII.1 (686 aa).

The N-terminal stretch at 1–20 is a signal peptide; sequence MKALLFLLTLFLILPNPISA. The interval 21–256 is legume-lectin like; the sequence is IDFIFNGFND…SHKILAWSFS (236 aa). The Extracellular portion of the chain corresponds to 21–286; sequence IDFIFNGFND…PKDSIVKAKW (266 aa). N-linked (GlcNAc...) asparagine glycans are attached at residues N29, N34, N52, N64, N111, N123, N168, N203, N224, and N259. Residues 287-307 traverse the membrane as a helical segment; it reads FVFVLVLICFLVVALVGLVLF. Residues 308 to 686 are Cytoplasmic-facing; it reads AVVRKRLERA…SWNSSILEGR (379 aa). The 282-residue stretch at 347-628 folds into the Protein kinase domain; the sequence is FDEKNVIGIG…VFEGDKAEIF (282 aa). ATP is bound by residues 353–361 and K376; that span reads IGIGGNGKV. The active-site Proton acceptor is D475.

This sequence in the C-terminal section; belongs to the protein kinase superfamily. Ser/Thr protein kinase family. The protein in the N-terminal section; belongs to the leguminous lectin family.

It localises to the cell membrane. The catalysed reaction is L-seryl-[protein] + ATP = O-phospho-L-seryl-[protein] + ADP + H(+). It carries out the reaction L-threonyl-[protein] + ATP = O-phospho-L-threonyl-[protein] + ADP + H(+). The protein is L-type lectin-domain containing receptor kinase VII.1 (LECRK71) of Arabidopsis thaliana (Mouse-ear cress).